A 1375-amino-acid chain; its full sequence is Probable GMP synthase [glutamine-hydrolyzing] (1375 aa).

Positions 7–119 constitute a Glutamine amidotransferase type-1; first part domain; that stretch reads QILVLDFGSQ…VLEIMESSQD (113 aa). The active-site Nucleophile is Cys84. The segment at 120–500 is insert-1; that stretch reads SKDSSCFAFQ…NNATQGFKSC (381 aa). N-acetyltransferase domains lie at 141-300 and 318-484; these read LSFD…KALE and VFLR…LEKK. One can recognise a Glutamine amidotransferase type-1; second part domain in the interval 501-580; it reads SLFKGIKQDS…AVGICGANTC (80 aa). Active-site residues include His554 and Glu556. Positions 597–1071 are insert-2; it reads IVYGGKAHCE…SGVANSLKIT (475 aa). One can recognise an N-acetyltransferase 3 domain in the interval 612-765; that stretch reads MQIQEAFKHI…ELIPLSIARE (154 aa). Residues 1011 to 1036 form a disordered region; sequence RIVDSQHTESSDIKGQSHLESSADSG. Over residues 1014-1027 the composition is skewed to basic and acidic residues; it reads DSQHTESSDIKGQS. Positions 1055 to 1250 constitute a GMPS ATP-PPase domain; it reads YLEGNDRSGV…LGMPESMLMR (196 aa). ATP is bound at residue 1083-1089; it reads SGGVDSS.

As to quaternary structure, homodimer.

The enzyme catalyses XMP + L-glutamine + ATP + H2O = GMP + L-glutamate + AMP + diphosphate + 2 H(+). Its pathway is purine metabolism; GMP biosynthesis; GMP from XMP (L-Gln route): step 1/1. In terms of biological role, catalyzes the synthesis of GMP from XMP. The sequence is that of Probable GMP synthase [glutamine-hydrolyzing] (guaA) from Helicobacter hepaticus (strain ATCC 51449 / 3B1).